We begin with the raw amino-acid sequence, 1150 residues long: Voltage-dependent calcium channel subunit alpha-2/delta-2 (1150 aa).

The signal sequence occupies residues 1 to 18 (MAVPARTCGASRPGPART). A disordered region spans residues 1 to 41 (MAVPARTCGASRPGPARTARPWPGCGPHPGPGTRRPTSGPP). The Extracellular portion of the chain corresponds to 19–1113 (ARPWPGCGPH…TEDTSDCGRG (1095 aa)). Positions 291 to 469 (DMVIIVDVSG…INTQEYLDVL (179 aa)) constitute a VWFA domain. A divalent metal cation contacts are provided by Asp297, Ser299, and Ser301. Positions 297-301 (DVSGS) match the MIDAS-like motif motif. 6 N-linked (GlcNAc...) asparagine glycosylation sites follow: Asn386, Asn418, Asn507, Asn540, Asn624, and Asn861. Cys443 and Cys1098 are oxidised to a cystine. The Cache domain occupies 485 to 574 (WTNVYEDALG…KPQTTNFREP (90 aa)). A helical transmembrane segment spans residues 1114 to 1134 (ASFPPSLGVLVSLQLLLLLGL). Residues 1135–1150 (PPRPQPQVLVHASRRL) lie on the Cytoplasmic side of the membrane.

It belongs to the calcium channel subunit alpha-2/delta family. Dimer formed of alpha-2-2 and delta-2 chains; disulfide-linked. Voltage-dependent calcium channels are multisubunit complexes, consisting of alpha-1 (CACNA1), alpha-2 (CACNA2D), beta (CACNB) and delta (CACNA2D) subunits in a 1:1:1:1 ratio. May be proteolytically processed into subunits alpha-2-2 and delta-2 that are disulfide-linked. It is however unclear whether such cleavage really takes place in vivo and has a functional role. In terms of tissue distribution, predominantly present in cerebellar cortex. Present in various lung tumor cell lines, while it is absent in normal lung (at protein level). Highly expressed in heart, lung, testis, pancreas and skeletal muscle. Also expressed in kidney, liver, placenta and brain.

It localises to the membrane. Functionally, the alpha-2/delta subunit of voltage-dependent calcium channels regulates calcium current density and activation/inactivation kinetics of the calcium channel. Acts as a regulatory subunit for P/Q-type calcium channel (CACNA1A), N-type (CACNA1B), L-type (CACNA1C OR CACNA1D) and possibly T-type (CACNA1G). Overexpression induces apoptosis. The polypeptide is Voltage-dependent calcium channel subunit alpha-2/delta-2 (CACNA2D2) (Homo sapiens (Human)).